The primary structure comprises 557 residues: Potassium-transporting ATPase potassium-binding subunit (557 aa).

A run of 10 helical transmembrane segments spans residues Met-1–Gly-21, Gln-62–Leu-82, Ile-132–Phe-152, Ile-176–Thr-196, Val-253–Ile-273, Ala-279–Ser-299, Ile-371–Phe-391, Leu-415–Leu-435, Val-482–Val-502, and Val-528–Leu-548.

Belongs to the KdpA family. The system is composed of three essential subunits: KdpA, KdpB and KdpC.

It localises to the cell membrane. Functionally, part of the high-affinity ATP-driven potassium transport (or Kdp) system, which catalyzes the hydrolysis of ATP coupled with the electrogenic transport of potassium into the cytoplasm. This subunit binds the extracellular potassium ions and delivers the ions to the membrane domain of KdpB through an intramembrane tunnel. In Clostridium acetobutylicum (strain ATCC 824 / DSM 792 / JCM 1419 / IAM 19013 / LMG 5710 / NBRC 13948 / NRRL B-527 / VKM B-1787 / 2291 / W), this protein is Potassium-transporting ATPase potassium-binding subunit.